The sequence spans 475 residues: Tubulin epsilon chain (475 aa).

GTP is bound at residue 148-154 (GGGTGSG).

The protein belongs to the tubulin family. Found in a complex with TEDC1, TEDC2, TUBE1 and TUBD1.

The protein resides in the cytoplasm. Its subcellular location is the cytoskeleton. The protein localises to the microtubule organizing center. It is found in the centrosome. The protein is Tubulin epsilon chain (TUBE1) of Homo sapiens (Human).